A 350-amino-acid polypeptide reads, in one-letter code: 2-oxoglutarate-dependent ethylene/succinate-forming enzyme (350 aa).

The 121-residue stretch at 166 to 286 (GWHHMRVLRF…RFACAYFHEP (121 aa)) folds into the Fe2OG dioxygenase domain. Fe cation-binding residues include H189 and H268.

Belongs to the iron/ascorbate-dependent oxidoreductase family. Monomer. Fe(2+) is required as a cofactor.

It carries out the reaction 2-oxoglutarate + O2 + 2 H(+) = ethene + 3 CO2 + H2O. It catalyses the reaction L-arginine + 2-oxoglutarate + O2 = guanidine + L-glutamate 5-semialdehyde + succinate + CO2. The protein operates within alkene biosynthesis; ethylene biosynthesis via 2-oxoglutarate. Its function is as follows. Simultaneously catalyzes two reactions, namely formation of ethylene and of succinate from 2-oxoglutarate. This is 2-oxoglutarate-dependent ethylene/succinate-forming enzyme (efe) from Pseudomonas amygdali pv. sesami (Pseudomonas syringae pv. sesami).